The following is a 95-amino-acid chain: Small ribosomal subunit protein uS19 (95 aa).

The segment at proline 76–lysine 95 is disordered. Positions glycine 82 to lysine 95 are enriched in basic and acidic residues.

It belongs to the universal ribosomal protein uS19 family.

In terms of biological role, protein S19 forms a complex with S13 that binds strongly to the 16S ribosomal RNA. This is Small ribosomal subunit protein uS19 (rpsS) from Thermotoga maritima (strain ATCC 43589 / DSM 3109 / JCM 10099 / NBRC 100826 / MSB8).